The primary structure comprises 477 residues: Transcription factor Sox-9-A (477 aa).

Disordered stretches follow at residues 1 to 66 and 157 to 274; these read MNLL…ETED and EAER…FRDV. Residues 27-42 are compositionally biased toward low complexity; the sequence is SDDSAGSPCPSGSGSD. 2 stretches are compositionally biased toward basic and acidic residues: residues 56 to 66 and 157 to 174; these read GDQELKKETED and EAER…DYKY. Residue K61 forms a Glycyl lysine isopeptide (Lys-Gly) (interchain with G-Cter in SUMO) linkage. The segment at 63-103 is dimerization (DIM); that stretch reads ETEDEKFPVCIREAVSQVLKGYDWTLVPMPVRVNGSSKNKP. The tract at residues 63 to 103 is PQA; the sequence is ETEDEKFPVCIREAVSQVLKGYDWTLVPMPVRVNGSSKNKP. A DNA-binding region (HMG box) is located at residues 105–173; the sequence is VKRPMNAFMV…QHKKDHPDYK (69 aa). Positions 211–222 are enriched in low complexity; the sequence is SPHSSSSMSEVH. Residues 224–308 are transactivation domain (TAM); it reads PGEHSGQSQG…LPPNGHPGVG (85 aa). Short sequence motifs (9aaTAD) lie at residues 276-285 and 291-299; these read IGELSSEVIS and DVNEFDQYL. The tract at residues 301-384 is disordered; it reads PNGHPGVGST…SDQQQQHSPQ (84 aa). 2 stretches are compositionally biased toward polar residues: residues 308–328 and 346–361; these read GSTQ…SATT and HSLS…SQQR. The interval 361-477 is transactivation domain (TAC); sequence RTHIKTEQLS…QPVYTQLTRP (117 aa). Residue K365 forms a Glycyl lysine isopeptide (Lys-Gly) (interchain with G-Cter in SUMO) linkage. Over residues 370–384 the composition is skewed to low complexity; it reads SPSHYSDQQQQHSPQ. The 9aaTAD 3 signature appears at 428 to 436; it reads SGLYSTFSY. Positions 446–477 are disordered; the sequence is TPIADTTGVPSIPQTHSPQHWEQPVYTQLTRP. Residues 453-477 are compositionally biased toward polar residues; it reads GVPSIPQTHSPQHWEQPVYTQLTRP.

Interacts with the sumoylation factors ube2i/ubc9 and sumo1. In terms of processing, sumoylated. Lys-365 is the major site of sumoylation, although sumoylation at Lys-61 also occurs. Sumoylation plays a key role in regulating formation of the neural crest and otic placode. As to expression, from mid-gastrula (stage 10.5-11), expressed in a ring around the blastopore, with expression decreasing toward the dorsal side. At stage 12, expression around the blastopore decreases and begins to increase lateral to the neural plate in the presumptive neural crest, where expression dramatically increases around stage 14. Also expressed in the otic placode as early as stage 13/14. By the tailbud stage expression is restricted to the otic cup and then throughout the otic vesicle, with more intense staining at the dorsal-most region, the prospective region of the semicircular canals and endolymphatic duct. At the early tailbud stage (stage 23), expressed in migrating cranial neural crest cells and in the trunk neural crest. Also expressed in the genital ridges, developing eye, nasal placode and prospective pineal gland. Around stage 25, expression is down-regulated in the trunk neural crest but persists in the migrating cranial crest cells as they populate the pharyngeal arches, otic placode, developing eye, genital ridges and notochord. By stage 31, expression remains strong in the pharyngeal arches. Also expressed in the pancreas; first expressed at stage 25 in the pancreatic anlagen, dorsally in diverticulum. As development proceeds, expression continues in pancreatic tissue, being restricted to ventral and dorsal pancreatic buds.

It localises to the nucleus. The protein resides in the cytoplasm. Transcription factor that plays a key role in chondrocytes differentiation and skeletal development. Specifically binds the 5'-ACAAAG-3' DNA motif present in enhancers and super-enhancers and promotes expression of genes important for chondrogenesis, including COL2A1. Plays a central role in successive steps of chondrocyte differentiation. Absolutely required for precartilaginous condensation, the first step in chondrogenesis during which skeletal progenitors differentiate into prechondrocytes. Together with SOX5 and SOX6, required for overt chondrogenesis when condensed prechondrocytes differentiate into early stage chondrocytes, the second step in chondrogenesis. Later, required to direct hypertrophic maturation and block osteoblast differentiation of growth plate chondrocytes: maintains chondrocyte columnar proliferation, delays prehypertrophy and then prevents osteoblastic differentiation of chondrocytes. Also required for chondrocyte hypertrophy, both indirectly, by keeping the lineage fate of chondrocytes, and directly, by remaining present in upper hypertrophic cells. Low lipid levels are the main nutritional determinant for chondrogenic commitment of skeletal progenitor cells: when lipids levels are low, FOXO transcription factors promote expression of SOX9, which induces chondrogenic commitment and suppresses fatty acid oxidation. In addition to cartilage development, also acts as a regulator of proliferation and differentiation in epithelial stem/progenitor cells. Involved in development of the cranial neural crest, which is fated to form skeletal elements. Also required for otic placode specification during inner ear development. This is Transcription factor Sox-9-A (sox9-a) from Xenopus laevis (African clawed frog).